The following is a 331-amino-acid chain: MDEKTKIYDITIIGGGPVGLFAAFYAGMRNASVKIIESLPQLGGQLSTLYPEKYIYDIPGYPAVRAQELVNNLIQQMKPFDPTIALEEAVQSVEKQVDGTFEIITKKDTHYSKAVIITAGNGAFEPRRLDLPEAEQYEGKNIHYFINDLSRFSGRRVAVCGGGDSAVDWALMLEKVASSVAIVHRRNAFRAHEHSVNNLEKSSIAIKTPFIPTEVLGNGDKLTHITLQEVKGDTRETLEIDDFIINYGFVSSLGPIKNWGLELERNSIVVNSKMETSIPGIYCAGDICTYDGKVKLIATGFGEAPTAINNAMNFIDPKTRVQPMHSTSLFE.

Glutamate 37, glutamine 45, tyrosine 50, valine 90, phenylalanine 124, aspartate 286, and threonine 327 together coordinate FAD.

Belongs to the ferredoxin--NADP reductase type 2 family. In terms of assembly, homodimer. It depends on FAD as a cofactor.

The enzyme catalyses 2 reduced [2Fe-2S]-[ferredoxin] + NADP(+) + H(+) = 2 oxidized [2Fe-2S]-[ferredoxin] + NADPH. This Listeria monocytogenes serotype 4b (strain F2365) protein is Ferredoxin--NADP reductase 2.